Consider the following 505-residue polypeptide: MAEFQGYLELDRSWKHDLLYPLIFREYIYVFAHDLGLNRSNLLENVGYDNKSSLLIVKRLISRMYQQNHFIISANDSNQNQLFGYNKNLYSQMISEGFAVIVEIPFSLRLVSSLKGTEIVKYYNLRSIHSIFPFLEDKFSQLNYVSDVLIPYPIHLEILVQTLRYWVKDASSLHLLRFFLHDYYNWNTLIIPNKYISIFSKSNPRLFLFLYNSHVCEYESILLFLRNQSSHLRLTSSGGFFERIYFYGKIKHPVEEVFANDSPTSLWFLEDLFMHYVRYQGKSILASKDTPLFMNKWKYYLVLLWQCHFYVWSQPGRMYINQLCKHSFSFLGYLSSMQINLSVVRSQMLENSFLMDNAMKKIDTLVPISLLIGSLDKMKFCNVLGHPVSKSTWADSSDFDIIDRFVCICRNLFHYYSGSSKKKSLYRIKYILRLSCVKTLARKHKSTVRTFLKKLGSNLLEEFFTEEEEVLSLIFPRTYSALRRSYKGRIWYLDIFCINDLVNHK.

This sequence belongs to the intron maturase 2 family. MatK subfamily.

The protein resides in the plastid. It localises to the chloroplast. Its function is as follows. Usually encoded in the trnK tRNA gene intron. Probably assists in splicing its own and other chloroplast group II introns. The polypeptide is Maturase K (Morus indica (Mulberry)).